A 207-amino-acid polypeptide reads, in one-letter code: Small ribosomal subunit protein uS4 (207 aa).

Residues 33–54 (KLDSKPGQHGRTSGARTSDYGN) form a disordered region. Residues 42–53 (GRTSGARTSDYG) show a composition bias toward polar residues. The 61-residue stretch at 97 to 157 (SRLDNVVYRM…EKSKKQVRIA (61 aa)) folds into the S4 RNA-binding domain.

The protein belongs to the universal ribosomal protein uS4 family. In terms of assembly, part of the 30S ribosomal subunit. Contacts protein S5. The interaction surface between S4 and S5 is involved in control of translational fidelity.

Its function is as follows. One of the primary rRNA binding proteins, it binds directly to 16S rRNA where it nucleates assembly of the body of the 30S subunit. In terms of biological role, with S5 and S12 plays an important role in translational accuracy. This is Small ribosomal subunit protein uS4 from Ralstonia pickettii (strain 12J).